Here is an 84-residue protein sequence, read N- to C-terminus: RNA-binding protein Hfq (84 aa).

One can recognise a Sm domain in the interval 10 to 70; sequence DLFLNVLRRD…ISTIMPFRPV (61 aa).

The protein belongs to the Hfq family. In terms of assembly, homohexamer.

Functionally, RNA chaperone that binds small regulatory RNA (sRNAs) and mRNAs to facilitate mRNA translational regulation in response to envelope stress, environmental stress and changes in metabolite concentrations. Also binds with high specificity to tRNAs. The chain is RNA-binding protein Hfq from Moorella thermoacetica (strain ATCC 39073 / JCM 9320).